Reading from the N-terminus, the 382-residue chain is uncharacterized protein (382 aa).

Transmembrane regions (helical) follow at residues 14 to 34, 45 to 65, 75 to 95, 102 to 122, 131 to 151, 157 to 177, 204 to 224, 231 to 251, 270 to 290, 291 to 311, 325 to 345, and 349 to 369; these read GLLL…LWLA, MVSS…GYLI, YLAS…VGFW, FIAG…LMCS, LLAA…LLVS, LLHV…PLLF, LGVN…GLMP, GMAN…GILG, VQVF…AMAP, ALFI…AWAC, ALLL…AMLM, and SDNL…LMLL.

The protein belongs to the major facilitator superfamily. YcaD (TC 2.A.1.26) family.

It is found in the cell inner membrane. This is an uncharacterized protein from Salmonella paratyphi A (strain ATCC 9150 / SARB42).